The sequence spans 413 residues: 1-deoxy-D-xylulose 5-phosphate reductoisomerase (413 aa).

NADPH contacts are provided by threonine 21, glycine 22, serine 23, isoleucine 24, glycine 47, and asparagine 127. Lysine 128 lines the 1-deoxy-D-xylulose 5-phosphate pocket. Glutamate 129 is a binding site for NADPH. Aspartate 151 serves as a coordination point for Mn(2+). Residues serine 152, glutamate 153, serine 177, and histidine 200 each coordinate 1-deoxy-D-xylulose 5-phosphate. Mn(2+) is bound at residue glutamate 153. Glycine 206 lines the NADPH pocket. Serine 213, asparagine 218, lysine 219, and glutamate 222 together coordinate 1-deoxy-D-xylulose 5-phosphate. A Mn(2+)-binding site is contributed by glutamate 222.

The protein belongs to the DXR family. Mg(2+) is required as a cofactor. Mn(2+) serves as cofactor.

The enzyme catalyses 2-C-methyl-D-erythritol 4-phosphate + NADP(+) = 1-deoxy-D-xylulose 5-phosphate + NADPH + H(+). It functions in the pathway isoprenoid biosynthesis; isopentenyl diphosphate biosynthesis via DXP pathway; isopentenyl diphosphate from 1-deoxy-D-xylulose 5-phosphate: step 1/6. Its function is as follows. Catalyzes the NADPH-dependent rearrangement and reduction of 1-deoxy-D-xylulose-5-phosphate (DXP) to 2-C-methyl-D-erythritol 4-phosphate (MEP). This chain is 1-deoxy-D-xylulose 5-phosphate reductoisomerase, found in Mycobacterium bovis (strain ATCC BAA-935 / AF2122/97).